The following is a 218-amino-acid chain: tRNA (guanine-N(7)-)-methyltransferase (218 aa).

Glu-45, Glu-70, Asp-97, and Asp-119 together coordinate S-adenosyl-L-methionine. Asp-119 is an active-site residue. Residue Lys-123 coordinates substrate. Positions 125 to 130 (RHEKRR) are interaction with RNA. Substrate is bound by residues Asp-155 and 195–198 (TEYE).

It belongs to the class I-like SAM-binding methyltransferase superfamily. TrmB family.

The catalysed reaction is guanosine(46) in tRNA + S-adenosyl-L-methionine = N(7)-methylguanosine(46) in tRNA + S-adenosyl-L-homocysteine. The protein operates within tRNA modification; N(7)-methylguanine-tRNA biosynthesis. Its function is as follows. Catalyzes the formation of N(7)-methylguanine at position 46 (m7G46) in tRNA. The chain is tRNA (guanine-N(7)-)-methyltransferase from Lactobacillus acidophilus (strain ATCC 700396 / NCK56 / N2 / NCFM).